The chain runs to 365 residues: Coxsackievirus and adenovirus receptor (365 aa).

A signal peptide spans 1–19; that stretch reads MALLLCFVLLCGVVDFARS. 2 Ig-like C2-type domains span residues 20–134 and 141–228; these read LSIT…KKIH and PSGA…LRLN. Over 20-237 the chain is Extracellular; the sequence is LSITTPEEMI…NVVPPSNKAG (218 aa). Intrachain disulfides connect Cys41–Cys120 and Cys162–Cys212. N-linked (GlcNAc...) asparagine glycosylation is found at Asn106 and Asn201. Residues 238-258 traverse the membrane as a helical segment; the sequence is LIAGAIIGTLLALALIGLIIF. S-palmitoyl cysteine attachment occurs at residues Cys259 and Cys260. At 259 to 365 the chain is on the cytoplasmic side; it reads CCRKKRREEK…PAQSKDGSIV (107 aa). Residues 269–282 show a composition bias toward basic and acidic residues; sequence YEKEVHHDIREDVP. A disordered region spans residues 269–343; that stretch reads YEKEVHHDIR…TLPPAKVAAP (75 aa). Polar residues predominate over residues 286 to 322; it reads SRTSTARSYIGSNHSSLGSMSPSNMEGYSKTQYNQVP. A phosphoserine mark is found at Ser297, Ser304, Ser306, Ser323, Ser332, and Ser363. The PDZ-binding motif lies at 360-365; sequence KDGSIV.

In terms of assembly, monomer. May form homodimer. Interacts with LNX, MAGI1, DLG4, PRKCABP, TJP1 and CTNNB1. Interacts with MPDZ; recruits MPDZ to intercellular contact sites. Interacts with JAML (homodimeric form). Secreted isoform 3, isoform 4 and isoform 5 can interact with the extracellular domain of the receptor. (Microbial infection) Interacts with adenovirus subgroups A, C, D, E and F fiber proteins as well as coxsackievirus B1, B2, B3, B4, B5 and B6 capsid proteins. In terms of processing, N-glycosylated. Post-translationally, palmitoylated on Cys-259 and/or Cys-260; required for proper localization to the plasma membrane. In terms of tissue distribution, expressed in pancreas, brain, heart, small intestine, testis, prostate and at a lower level in liver and lung. Isoform 5 is ubiquitously expressed. Isoform 3 is expressed in heart, lung and pancreas. In skeletal muscle, isoform 1 is found at the neuromuscular junction and isoform 2 is found in blood vessels. In cardiac muscle, isoform 1 and isoform 2 are found at intercalated disks. In heart expressed in subendothelial layers of the vessel wall but not in the luminal endothelial surface. Expression is elevated in hearts with dilated cardiomyopathy.

It localises to the cell membrane. It is found in the basolateral cell membrane. Its subcellular location is the cell junction. The protein resides in the tight junction. The protein localises to the adherens junction. It localises to the secreted. In terms of biological role, component of the epithelial apical junction complex that may function as a homophilic cell adhesion molecule and is essential for tight junction integrity. Also involved in transepithelial migration of leukocytes through adhesive interactions with JAML a transmembrane protein of the plasma membrane of leukocytes. The interaction between both receptors also mediates the activation of gamma-delta T-cells, a subpopulation of T-cells residing in epithelia and involved in tissue homeostasis and repair. Upon epithelial CXADR-binding, JAML induces downstream cell signaling events in gamma-delta T-cells through PI3-kinase and MAP kinases. It results in proliferation and production of cytokines and growth factors by T-cells that in turn stimulate epithelial tissues repair. Its function is as follows. (Microbial infection) Acts as a receptor for adenovirus type C. (Microbial infection) Acts as a receptor for Coxsackievirus B1 to B6. The sequence is that of Coxsackievirus and adenovirus receptor (CXADR) from Homo sapiens (Human).